A 146-amino-acid polypeptide reads, in one-letter code: L-fucose mutarotase (146 aa).

Residue His-22 is the Proton donor of the active site. Substrate-binding positions include Asp-30, Arg-109, and 131 to 133; that span reads YGN.

This sequence belongs to the RbsD / FucU family. FucU mutarotase subfamily. As to quaternary structure, homodecamer.

The protein localises to the cytoplasm. The catalysed reaction is alpha-L-fucose = beta-L-fucose. Its pathway is carbohydrate metabolism; L-fucose metabolism. Functionally, involved in the anomeric conversion of L-fucose. The sequence is that of L-fucose mutarotase from Glaesserella parasuis serovar 5 (strain SH0165) (Haemophilus parasuis).